A 99-amino-acid chain; its full sequence is Prostate and testis expressed protein 14 (99 aa).

Residues 1-21 (MEKYLLLLLLGIFLRVGFLQA) form the signal peptide. A UPAR/Ly6 domain is found at 22–99 (LTCVSCGRLN…CDHQNLCNKP (78 aa)). Cystine bridges form between C24–C51, C27–C36, C43–C69, C73–C89, and C90–C96. N31 is a glycosylation site (N-linked (GlcNAc...) asparagine). An N-linked (GlcNAc...) asparagine glycan is attached at N75.

This sequence belongs to the PATE family. In terms of assembly, monomer. In terms of processing, glycosylated. As to expression, predominantly expressed in the seminal vesicles. Expressed in prostate, and to a lesser extent in the cauda epididymis.

It is found in the secreted. The polypeptide is Prostate and testis expressed protein 14 (Mus musculus (Mouse)).